We begin with the raw amino-acid sequence, 747 residues long: Phosphoribosylformylglycinamidine synthase subunit PurL (747 aa).

Residue His46 is part of the active site. Residues Tyr49 and Lys88 each contribute to the ATP site. Glu90 is a binding site for Mg(2+). Substrate is bound by residues 91 to 94 (SHNH) and Arg113. The active-site Proton acceptor is His92. Asp114 contacts Mg(2+). Gln237 provides a ligand contact to substrate. Asp265 contributes to the Mg(2+) binding site. 309–311 (ESQ) contributes to the substrate binding site. ATP contacts are provided by Asp493 and Gly530. Asn531 serves as a coordination point for Mg(2+). Ser533 contributes to the substrate binding site.

This sequence belongs to the FGAMS family. Monomer. Part of the FGAM synthase complex composed of 1 PurL, 1 PurQ and 2 PurS subunits.

The protein resides in the cytoplasm. It catalyses the reaction N(2)-formyl-N(1)-(5-phospho-beta-D-ribosyl)glycinamide + L-glutamine + ATP + H2O = 2-formamido-N(1)-(5-O-phospho-beta-D-ribosyl)acetamidine + L-glutamate + ADP + phosphate + H(+). Its pathway is purine metabolism; IMP biosynthesis via de novo pathway; 5-amino-1-(5-phospho-D-ribosyl)imidazole from N(2)-formyl-N(1)-(5-phospho-D-ribosyl)glycinamide: step 1/2. In terms of biological role, part of the phosphoribosylformylglycinamidine synthase complex involved in the purines biosynthetic pathway. Catalyzes the ATP-dependent conversion of formylglycinamide ribonucleotide (FGAR) and glutamine to yield formylglycinamidine ribonucleotide (FGAM) and glutamate. The FGAM synthase complex is composed of three subunits. PurQ produces an ammonia molecule by converting glutamine to glutamate. PurL transfers the ammonia molecule to FGAR to form FGAM in an ATP-dependent manner. PurS interacts with PurQ and PurL and is thought to assist in the transfer of the ammonia molecule from PurQ to PurL. The sequence is that of Phosphoribosylformylglycinamidine synthase subunit PurL from Deinococcus radiodurans (strain ATCC 13939 / DSM 20539 / JCM 16871 / CCUG 27074 / LMG 4051 / NBRC 15346 / NCIMB 9279 / VKM B-1422 / R1).